An 89-amino-acid chain; its full sequence is U-scoloptoxin(11)-Sm4a (89 aa).

Positions 1-17 (MFFKLVLVSAVAIQALS) are cleaved as a signal peptide.

This sequence belongs to the scoloptoxin-11 family. In terms of processing, contains 3 disulfide bonds. In terms of tissue distribution, expressed by the venom gland.

It is found in the secreted. This chain is U-scoloptoxin(11)-Sm4a, found in Scolopendra morsitans (Tanzanian blue ringleg centipede).